Reading from the N-terminus, the 1095-residue chain is Mediator of RNA polymerase II transcription subunit 15 (1095 aa).

Over residues 66-83 (KSKIDAMRSTRDKRKRES) the composition is skewed to basic and acidic residues. Disordered stretches follow at residues 66 to 197 (KSKI…LTQQ), 265 to 323 (QQQQ…RNPN), 448 to 508 (SAAD…LNPT), 633 to 672 (QQQQ…KNQT), 737 to 847 (PTMA…QPGN), and 1050 to 1075 (SEAA…SMAG). Low complexity-rich tracts occupy residues 99–113 (NNNN…NNLN) and 133–154 (NSNA…PNGN). Positions 155–165 (DGTANPQMFMN) are enriched in polar residues. A compositionally biased stretch (low complexity) spans 166–178 (QQAQARQQAAARQ). Positions 448 to 473 (SAADSTMNNSNQPMNIGNNGVNMIPN) are enriched in polar residues. Composition is skewed to low complexity over residues 487-500 (QTPQ…QSNR), 633-662 (QQQQ…MQQA), and 780-793 (PTPQ…PSTT). Polar residues-rich tracts occupy residues 794–810 (NLSA…SATP), 817–847 (PKST…QPGN), and 1050–1062 (SEAA…SSLM).

This sequence belongs to the Mediator complex subunit 15 family. As to quaternary structure, component of the Mediator complex.

It is found in the nucleus. Component of the Mediator complex, a coactivator involved in regulated gene transcription of nearly all RNA polymerase II-dependent genes. Mediator functions as a bridge to convey information from gene-specific regulatory proteins to the basal RNA polymerase II transcription machinery. Mediator is recruited to promoters by direct interactions with regulatory proteins and serves as a scaffold for the assembly of a functional preinitiation complex with RNA polymerase II and the general transcription factors. The sequence is that of Mediator of RNA polymerase II transcription subunit 15 (GAL11) from Candida glabrata (strain ATCC 2001 / BCRC 20586 / JCM 3761 / NBRC 0622 / NRRL Y-65 / CBS 138) (Yeast).